A 99-amino-acid chain; its full sequence is Protein translation factor SUI1 homolog (99 aa).

Belongs to the SUI1 family.

This Sulfolobus acidocaldarius (strain ATCC 33909 / DSM 639 / JCM 8929 / NBRC 15157 / NCIMB 11770) protein is Protein translation factor SUI1 homolog.